We begin with the raw amino-acid sequence, 60 residues long: UPF0434 protein SG0997 (60 aa).

It belongs to the UPF0434 family.

This chain is UPF0434 protein SG0997, found in Sodalis glossinidius (strain morsitans).